The chain runs to 300 residues: Endonuclease III-like protein 1 (300 aa).

Residues 1–19 (MNSGVRMVTRSRSRATRIA) constitute a mitochondrion transit peptide. Residues 1 to 53 (MNSGVRMVTRSRSRATRIASEGCREELAPREAAAEGRKSHRPVRHPRRTQKTH) are disordered. Over residues 22–37 (GCREELAPREAAAEGR) the composition is skewed to basic and acidic residues. The segment covering 38–51 (KSHRPVRHPRRTQK) has biased composition (basic residues). One can recognise a HhH domain in the interval 187–211 (RYEGDIPASVAELVALPGVGPKMAH). Catalysis depends on Lys-208, which acts as the Nucleophile; for N-glycosylase activity. [4Fe-4S] cluster is bound by residues Cys-278, Cys-285, Cys-288, and Cys-294.

This sequence belongs to the Nth/MutY family. Interacts with YBX1. Interacts with ERCC5/XPG; the interaction stimulates NTHL1 activity and NTHL1 binding to its DNA substrate. [4Fe-4S] cluster is required as a cofactor. In terms of processing, ubiquitinated by TRIM26; leading to proteasomal degradation. Widely expressed.

It is found in the nucleus. The protein resides in the mitochondrion. The enzyme catalyses 2'-deoxyribonucleotide-(2'-deoxyribose 5'-phosphate)-2'-deoxyribonucleotide-DNA = a 3'-end 2'-deoxyribonucleotide-(2,3-dehydro-2,3-deoxyribose 5'-phosphate)-DNA + a 5'-end 5'-phospho-2'-deoxyribonucleoside-DNA + H(+). In terms of biological role, bifunctional DNA N-glycosylase with associated apurinic/apyrimidinic (AP) lyase function that catalyzes the first step in base excision repair (BER), the primary repair pathway for the repair of oxidative DNA damage. The DNA N-glycosylase activity releases the damaged DNA base from DNA by cleaving the N-glycosidic bond, leaving an AP site. The AP lyase activity cleaves the phosphodiester bond 3' to the AP site by a beta-elimination. Primarily recognizes and repairs oxidative base damage of pyrimidines. The sequence is that of Endonuclease III-like protein 1 (Nthl1) from Mus musculus (Mouse).